The chain runs to 256 residues: DNA polymerase sliding clamp 2 (256 aa).

It belongs to the PCNA family. In terms of assembly, homotrimer. The subunits circularize to form a toroid; DNA passes through its center. Replication factor C (RFC) is required to load the toroid on the DNA.

Functionally, sliding clamp subunit that acts as a moving platform for DNA processing. Responsible for tethering the catalytic subunit of DNA polymerase and other proteins to DNA during high-speed replication. In Pyrobaculum aerophilum (strain ATCC 51768 / DSM 7523 / JCM 9630 / CIP 104966 / NBRC 100827 / IM2), this protein is DNA polymerase sliding clamp 2.